The following is a 215-amino-acid chain: 3-isopropylmalate dehydratase small subunit (215 aa).

It belongs to the LeuD family. LeuD type 1 subfamily. Heterodimer of LeuC and LeuD.

The catalysed reaction is (2R,3S)-3-isopropylmalate = (2S)-2-isopropylmalate. It participates in amino-acid biosynthesis; L-leucine biosynthesis; L-leucine from 3-methyl-2-oxobutanoate: step 2/4. In terms of biological role, catalyzes the isomerization between 2-isopropylmalate and 3-isopropylmalate, via the formation of 2-isopropylmaleate. The sequence is that of 3-isopropylmalate dehydratase small subunit from Xanthomonas euvesicatoria pv. vesicatoria (strain 85-10) (Xanthomonas campestris pv. vesicatoria).